The sequence spans 303 residues: Caspase-7 (303 aa).

Acidic residues predominate over residues 1–21 (MADDQGCIEEQGVEDSANEDS). Residues 1-30 (MADDQGCIEEQGVEDSANEDSVDAKPDRSS) form a disordered region. Position 2 is an N-acetylalanine (A2). Residues 2-23 (ADDQGCIEEQGVEDSANEDSVD) constitute a propeptide, N-terminally processed. S30 carries the post-translational modification Phosphoserine; by PAK2. At S37 the chain carries Phosphoserine. The segment at 38 to 41 (KKKK) is exosite. The segment at 76–87 (KNFDKVTGMGVR) is loop L1. The active site involves H144. T173 bears the Phosphothreonine; by PAK2 mark. C186 is a catalytic residue. A loop L2 region spans residues 187–196 (RGTELDDGIQ). Residues 199-206 (SGPINDTD) constitute a propeptide that is removed on maturation. Residues 226 to 238 (VPGYYSWRSPGRG) are loop L3. Residue R233 is modified to (Microbial infection) ADP-riboxanated arginine. A Phosphoserine; by PAK2 modification is found at S239. Residues 274–288 (ESQSDDPHFHEKKQI) are loop L4.

This sequence belongs to the peptidase C14A family. In terms of assembly, heterotetramer that consists of two anti-parallel arranged heterodimers, each one formed by a 20 kDa (p20) and a 11 kDa (p11) subunit. Interacts with XIAP (via its second BIR domain); inhibiting CASP7 activity. Interacts with BIRC6/bruce. Interacts with ATXN3 (short isoform 1). Interacts with HSPA5. Cleavage by different proteases, such as granzyme B (GZMB), caspase-1 (CASP1), caspase-8 (CASP8), caspase-9 (CASP9) or caspase-10 (CASP10) generate the two active subunits. Its involvement in different programmed cell death processes is probably specified by the protease that activates CASP7. Cleaved and activated by initiator caspases (CASP8, CASP9 and/or CASP10), leading to execution phase of apoptosis. Cleavage and maturation by GZMB regulates granzyme-mediated programmed cell death. Cleaved and activated by CASP1 in response to bacterial infection. Propeptide domains can also be cleaved efficiently by CASP3. Active heterodimers between the small subunit of caspase-7 and the large subunit of CASP3, and vice versa, also occur. Also cleaved at the N-terminus at alternative sites by CAPN1, leading to its activation. Post-translationally, phosphorylation at Ser-30 and Ser-239 by PAK2 inhibits its activity. Phosphorylation at Ser-30 prevents cleavage and activation by initiator caspase CASP9, while phosphorylation at Ser-239 prevents thiol protease activity by preventing substrate-binding. In terms of processing, (Microbial infection) ADP-riboxanation by C.violaceum CopC blocks CASP7 processing, preventing CASP7 activation and ability to recognize and cleave substrates. Ubiquitinated by BIRC6; this activity is inhibited by DIABLO/SMAC. In terms of tissue distribution, highly expressed in lung, skeletal muscle, liver, kidney, spleen and heart, and moderately in testis. No expression in the brain.

It is found in the cytoplasm. The protein resides in the cytosol. The protein localises to the nucleus. It localises to the secreted. Its subcellular location is the extracellular space. The catalysed reaction is Strict requirement for an Asp residue at position P1 and has a preferred cleavage sequence of Asp-Glu-Val-Asp-|-.. With respect to regulation, during activation, the N-terminal disordered prodomain is removed by cleavage. Concomitantly, double cleavage gives rise to a large Caspase-7 subunit p20 and a small Caspase-7 subunit p11. The two large and two small subunits then assemble to form the active CASP7 complex. Can be cleaved and activated by different caspases, depending on the context. Cleaved and activated by initiator caspases (CASP8, CASP9 and/or CASP10), leading to execution phase of apoptosis. Inhibited by XIAP, which directly binds to the active site pocket and obstructs substrate entry. Cleavage and maturation by GZMB regulates granzyme-mediated programmed cell death. Cleavage and maturation by CASP1 regulates pyroptosis. Phosphorylation at Ser-30 and Ser-239 by PAK2 inhibits its activity. Inhibited by isatin sulfonamides. Inhibited by 2-(2,4-Dichlorophenoxy)- N-(2-mercapto-ethyl)-acetamide (DICA) and 5-Fluoro-1H-indole-2- carboxylic acid (2-mercapto-ethyl)-amide (FICA) allosteric inhibitors, which disrupt an interaction between Arg-187 and Tyr-223. Specifically inhibited by DARPin D7.18 and D7.43, which specifically bind to the precursor CASP7 and prevent its processing and activation. Inhibited by BIRC6; following inhibition of BIRC6-caspase binding by DIABLO/SMAC, BIRC6 is subjected to caspase cleavage, leading to an increase in active caspases. Functionally, thiol protease involved in different programmed cell death processes, such as apoptosis, pyroptosis or granzyme-mediated programmed cell death, by proteolytically cleaving target proteins. Has a marked preference for Asp-Glu-Val-Asp (DEVD) consensus sequences, with some plasticity for alternate non-canonical sequences. Its involvement in the different programmed cell death processes is probably determined by upstream proteases that activate CASP7. Acts as an effector caspase involved in the execution phase of apoptosis: following cleavage and activation by initiator caspases (CASP8, CASP9 and/or CASP10), mediates execution of apoptosis by catalyzing cleavage of proteins, such as CLSPN, PARP1, PTGES3 and YY1. Compared to CASP3, acts as a minor executioner caspase and cleaves a limited set of target proteins. Acts as a key regulator of the inflammatory response in response to bacterial infection by catalyzing cleavage and activation of the sphingomyelin phosphodiesterase SMPD1 in the extracellular milieu, thereby promoting membrane repair. Regulates pyroptosis in intestinal epithelial cells: cleaved and activated by CASP1 in response to S.typhimurium infection, promoting its secretion to the extracellular milieu, where it catalyzes activation of SMPD1, generating ceramides that repair membranes and counteract the action of gasdermin-D (GSDMD) pores. Regulates granzyme-mediated programmed cell death in hepatocytes: cleaved and activated by granzyme B (GZMB) in response to bacterial infection, promoting its secretion to the extracellular milieu, where it catalyzes activation of SMPD1, generating ceramides that repair membranes and counteract the action of perforin (PRF1) pores. Following cleavage by CASP1 in response to inflammasome activation, catalyzes processing and inactivation of PARP1, alleviating the transcription repressor activity of PARP1. Acts as an inhibitor of type I interferon production during virus-induced apoptosis by mediating cleavage of antiviral proteins CGAS, IRF3 and MAVS, thereby preventing cytokine overproduction. Cleaves and activates sterol regulatory element binding proteins (SREBPs). Cleaves phospholipid scramblase proteins XKR4, XKR8 and XKR9. In case of infection, catalyzes cleavage of Kaposi sarcoma-associated herpesvirus protein ORF57, thereby preventing expression of viral lytic genes. Cleaves BIRC6 following inhibition of BIRC6-caspase binding by DIABLO/SMAC. Lacks enzymatic activity. This is Caspase-7 from Homo sapiens (Human).